The primary structure comprises 672 residues: Protein seu-1 (672 aa).

Disordered regions lie at residues 1 to 463 and 576 to 672; these read MSSI…AGTE and LAPP…LKHL. A compositionally biased stretch (basic and acidic residues) spans 8 to 20; the sequence is NDNRRPTFRDHRT. Gly residues predominate over residues 25–34; the sequence is GRGGSGGGGR. Residues 62–85 are compositionally biased toward basic and acidic residues; sequence RSQDHRQRSPEVRRHRSPEKESKD. Over residues 87-105 the composition is skewed to low complexity; the sequence is VVTSTGSSRGATSASVTSS. Basic and acidic residues-rich tracts occupy residues 107 to 138, 189 to 226, 234 to 268, and 289 to 306; these read RRHE…DADR, VSRH…KSNG, RRRE…KVED, and EQAK…ESHQ. Positions 307–317 are enriched in low complexity; that stretch reads SAHSAAVSNAS. The span at 322–343 shows a compositional bias: acidic residues; that stretch reads SEEELDYEEDDIDVDLDGDIDV. Basic and acidic residues-rich tracts occupy residues 366–375, 382–396, 410–424, 436–447, 607–626, and 636–659; these read NDVKDETMEE, PEKK…DDKD, RRED…SDHH, RATDHKESRRSE, SFGD…RHMD, and DHRV…ERGF.

As to expression, highly expressed in intestinal cells, lateral hypodermal (seam) cells, Pn.p ventral hypodermal cells, and spermatheca. Expressed at low levels in the ventral nerve cord.

It is found in the nucleus. In terms of biological role, together with unc-5, involved in touch neuron axon guidance. During gonad morphogenesis, plays a role in the unc-5-/unc-6-mediated migration of distal tip cells along the body. The polypeptide is Protein seu-1 (Caenorhabditis elegans).